The following is a 179-amino-acid chain: MSLKTRYRETIRPKLLKDLGLKNVHQVPKVQKVTLNRGLGEAATNSKALEASLKEMATISGQKALVTRAKKAIATFKIRQGMPIGCAVTLRGDRMYAFLERFINLALPRIRDFRGVSPKSFDGRGNYTIGVKEQLIFPEITFDKVDTIRGMDITIVTSASSDEQGKALLSEMGMPFRKK.

The protein belongs to the universal ribosomal protein uL5 family. As to quaternary structure, part of the 50S ribosomal subunit; part of the 5S rRNA/L5/L18/L25 subcomplex. Contacts the 5S rRNA and the P site tRNA. Forms a bridge to the 30S subunit in the 70S ribosome.

Functionally, this is one of the proteins that bind and probably mediate the attachment of the 5S RNA into the large ribosomal subunit, where it forms part of the central protuberance. In the 70S ribosome it contacts protein S13 of the 30S subunit (bridge B1b), connecting the 2 subunits; this bridge is implicated in subunit movement. Contacts the P site tRNA; the 5S rRNA and some of its associated proteins might help stabilize positioning of ribosome-bound tRNAs. This is Large ribosomal subunit protein uL5 from Prochlorococcus marinus (strain NATL2A).